We begin with the raw amino-acid sequence, 492 residues long: Phosphoenolpyruvate carboxylase (492 aa).

It belongs to the PEPCase type 2 family. As to quaternary structure, homotetramer. The cofactor is Mg(2+).

It carries out the reaction oxaloacetate + phosphate = phosphoenolpyruvate + hydrogencarbonate. In terms of biological role, catalyzes the irreversible beta-carboxylation of phosphoenolpyruvate (PEP) to form oxaloacetate (OAA), a four-carbon dicarboxylic acid source for the tricarboxylic acid cycle. The sequence is that of Phosphoenolpyruvate carboxylase from Halobacterium salinarum (strain ATCC 29341 / DSM 671 / R1).